A 358-amino-acid polypeptide reads, in one-letter code: Probable ABC transporter periplasmic-binding protein y4fP (358 aa).

The N-terminal stretch at 1–46 is a signal peptide; the sequence is MRNVIKLTWSRRKRSASLDKGENIMKLAFAFATAAIVVAAAFPALA.

It belongs to the bacterial solute-binding protein 1 family.

It localises to the periplasm. Its function is as follows. Probably part of the binding-protein-dependent transport system y4fNOP. The sequence is that of Probable ABC transporter periplasmic-binding protein y4fP from Sinorhizobium fredii (strain NBRC 101917 / NGR234).